Consider the following 139-residue polypeptide: Transcriptional regulator WhiB5 (139 aa).

A 4Fe-4S Wbl-type domain is found at 4–77 (PCATDPELWF…AGIKLPGGQY (74 aa)). [4Fe-4S] cluster contacts are provided by C5, C41, C45, and C53.

This sequence belongs to the WhiB family. [4Fe-4S] cluster serves as cofactor. The Fe-S cluster can be nitrosylated by nitric oxide (NO). In terms of processing, upon Fe-S cluster removal intramolecular disulfide bonds are formed.

It is found in the cytoplasm. A transcription factor that is probably redox-responsive. Probably plays a role in immunomodulation and reactivation after chronic infection. Its induction results in transcription of a number of genes including sigM, and the genes for 2 type VII secretion systems ESX-2 and ESX-4. Seems to negatively regulate its own expression. The apo-form has been shown to act as a protein disulfide reductase. The apo- but not holo-form probably binds DNA. The protein is Transcriptional regulator WhiB5 (whiB5) of Mycobacterium tuberculosis (strain ATCC 25618 / H37Rv).